The following is a 405-amino-acid chain: 8-amino-7-oxononanoate synthase 2 (405 aa).

Arg-20 contacts substrate. Pyridoxal 5'-phosphate is bound at residue 116-117 (GY). His-141 is a binding site for substrate. Pyridoxal 5'-phosphate is bound by residues Ser-187, His-215, and Thr-243. Lys-246 carries the N6-(pyridoxal phosphate)lysine modification. Thr-369 contributes to the substrate binding site.

The protein belongs to the class-II pyridoxal-phosphate-dependent aminotransferase family. BioF subfamily. In terms of assembly, homodimer. Requires pyridoxal 5'-phosphate as cofactor.

It catalyses the reaction 6-carboxyhexanoyl-[ACP] + L-alanine + H(+) = (8S)-8-amino-7-oxononanoate + holo-[ACP] + CO2. The protein operates within cofactor biosynthesis; biotin biosynthesis. In terms of biological role, catalyzes the decarboxylative condensation of pimeloyl-[acyl-carrier protein] and L-alanine to produce 8-amino-7-oxononanoate (AON), [acyl-carrier protein], and carbon dioxide. In Polaromonas sp. (strain JS666 / ATCC BAA-500), this protein is 8-amino-7-oxononanoate synthase 2.